The following is a 273-amino-acid chain: Protein PERCC1 (273 aa).

Disordered stretches follow at residues 18–84 (SHES…PETP) and 253–273 (GGSE…LAEV). The span at 28–56 (EAPEISEEEEEEEEEEEEEEEEEEVDQDQ) shows a compositional bias: acidic residues. Over residues 67–83 (DSQSSGVVPQDPSSPET) the composition is skewed to polar residues.

As to expression, specifically expressed in the stomach, pancreas and intestine. In gastrointestinal tissue, expression is primarily restricted to gastric G cells and duodenal enteroendocrine cells (EECs).

Functionally, plays a critical role in intestinal function by promoting the development of enteroendocrine cells (EECs) of the gastrointestinal tract and pancreas. It is thereby required for normal enteroendocrine peptide hormone secretion. This chain is Protein PERCC1, found in Mus musculus (Mouse).